Here is a 180-residue protein sequence, read N- to C-terminus: UPF0227 protein KPN78578_10770 (180 aa).

It belongs to the UPF0227 family.

This chain is UPF0227 protein KPN78578_10770, found in Klebsiella pneumoniae subsp. pneumoniae (strain ATCC 700721 / MGH 78578).